A 383-amino-acid polypeptide reads, in one-letter code: MFQTFRKWFWSERYWLPPTIKWSDLEDHDGLVFVKASHLYITIPYAFLLMVVRYFFEKFVATPLANALGIKKTQHKIKPNAILENFFKHSTSKPSHTDIYGLAKKCNLTERQVERWLRIRQKQNKPCRLQKFQESCWRFTFYLLITMAGAVFLYDKPWAYDLWEVWNDYPRQPLLPSQYWYYILEMSFYWSLVFSLSTDIKRKDFLAHVIHHLAAISLMSFSWCANYIRSGTLVMFIHDISDIWLESAKMFSYAGWKQTCNTLFFIFTVVFFISRFIIFPFWILYCTLILPLHYLEPFFSYIFLNLQLMILQGLHVYWGYFILKMLNRCIFTQNVQDVRSDNEEEEEEEEEEEAESTKGKETEYLKNGLGTNRHLIANGQHGR.

The chain crosses the membrane as a helical span at residues 32–52 (VFVKASHLYITIPYAFLLMVV). The interval 66–127 (NALGIKKTQH…RIRQKQNKPC (62 aa)) is homeobox-like. The 202-residue stretch at 130–331 (QKFQESCWRF…ILKMLNRCIF (202 aa)) folds into the TLC domain. 5 consecutive transmembrane segments (helical) span residues 139 to 159 (FTFYLLITMAGAVFLYDKPWA), 174 to 194 (LLPSQYWYYILEMSFYWSLVF), 205 to 225 (FLAHVIHHLAAISLMSFSWCA), 263 to 283 (LFFIFTVVFFISRFIIFPFWI), and 302 to 322 (IFLNLQLMILQGLHVYWGYFI). Topologically, residues 323-383 (LKMLNRCIFT…HLIANGQHGR (61 aa)) are cytoplasmic. S340 carries the post-translational modification Phosphoserine. Positions 340-383 (SDNEEEEEEEEEEEAESTKGKETEYLKNGLGTNRHLIANGQHGR) are disordered. The span at 342 to 354 (NEEEEEEEEEEEA) shows a compositional bias: acidic residues. The segment covering 355–364 (ESTKGKETEY) has biased composition (basic and acidic residues).

As to expression, predominantly expressed in testis. In skin, present in the upper stratum spinosum and stratum granulosum (at protein level).

It localises to the endoplasmic reticulum membrane. The enzyme catalyses a very long-chain fatty acyl-CoA + a sphingoid base = an N-(very-long-chain fatty acyl)-sphingoid base + CoA + H(+). The catalysed reaction is docosanoyl-CoA + sphinganine = N-docosanoylsphinganine + CoA + H(+). It catalyses the reaction tetracosanoyl-CoA + sphinganine = N-tetracosanoylsphinganine + CoA + H(+). It carries out the reaction hexacosanoyl-CoA + sphinganine = N-hexacosanoylsphinganine + CoA + H(+). The enzyme catalyses 2-hydroxydocosanoyl-CoA + sphinganine = N-(2-hydroxydocosanoyl)-sphinganine + CoA + H(+). The catalysed reaction is 2-hydroxytetracosanoyl-CoA + sphinganine = N-(2-hydroxytetracosanoyl)-sphinganine + CoA + H(+). It catalyses the reaction an ultra-long-chain fatty acyl-CoA + a sphingoid base = an N-(ultra-long-chain-acyl)-sphingoid base + CoA + H(+). It carries out the reaction octacosanoyl-CoA + sphinganine = N-(octacosanoyl)-sphinganine + CoA + H(+). The enzyme catalyses a fatty acyl-CoA + sphing-4-enine = an N-acylsphing-4-enine + CoA + H(+). The catalysed reaction is sphinganine + octadecanoyl-CoA = N-(octadecanoyl)-sphinganine + CoA + H(+). It catalyses the reaction 2-hydroxyoctadecanoyl-CoA + sphinganine = N-(2-hydroxyoctadecanoyl)-sphinganine + CoA + H(+). It participates in lipid metabolism; sphingolipid metabolism. In terms of biological role, ceramide synthase that catalyzes the transfer of the acyl chain from acyl-CoA to a sphingoid base, with high selectivity toward very- and ultra-long-chain fatty acyl-CoA (chain length greater than C22). N-acylates sphinganine and sphingosine bases to form dihydroceramides and ceramides in de novo synthesis and salvage pathways, respectively. It is crucial for the synthesis of ultra-long-chain ceramides in the epidermis, to maintain epidermal lipid homeostasis and terminal differentiation. This Mus musculus (Mouse) protein is Ceramide synthase 3.